Consider the following 432-residue polypeptide: Histidine--tRNA ligase (432 aa).

It belongs to the class-II aminoacyl-tRNA synthetase family.

The protein resides in the cytoplasm. The enzyme catalyses tRNA(His) + L-histidine + ATP = L-histidyl-tRNA(His) + AMP + diphosphate + H(+). The sequence is that of Histidine--tRNA ligase from Halobacterium salinarum (strain ATCC 29341 / DSM 671 / R1).